Here is a 319-residue protein sequence, read N- to C-terminus: 2,3,4,5-tetrahydropyridine-2,6-dicarboxylate N-succinyltransferase (319 aa).

Mg(2+) contacts are provided by D167 and E184. The active-site Acyl-anhydride intermediate is E200. Residues R202, G217, S220, A243, 258–259 (EA), and K278 each bind succinyl-CoA.

The protein belongs to the type 2 tetrahydrodipicolinate N-succinyltransferase family. In terms of assembly, homotrimer.

The protein resides in the cytoplasm. It carries out the reaction (S)-2,3,4,5-tetrahydrodipicolinate + succinyl-CoA + H2O = (S)-2-succinylamino-6-oxoheptanedioate + CoA. Its pathway is amino-acid biosynthesis; L-lysine biosynthesis via DAP pathway; LL-2,6-diaminopimelate from (S)-tetrahydrodipicolinate (succinylase route): step 1/3. Its function is as follows. Catalyzes the conversion of the cyclic tetrahydrodipicolinate (THDP) into the acyclic N-succinyl-L-2-amino-6-oxopimelate using succinyl-CoA. The polypeptide is 2,3,4,5-tetrahydropyridine-2,6-dicarboxylate N-succinyltransferase (Salinispora tropica (strain ATCC BAA-916 / DSM 44818 / JCM 13857 / NBRC 105044 / CNB-440)).